Here is a 411-residue protein sequence, read N- to C-terminus: Probable tRNA pseudouridine synthase D (411 aa).

Aspartate 79 serves as the catalytic Nucleophile. The TRUD domain maps to 150–369 (GFPNYFGQQR…STGDRRIVSA (220 aa)).

Belongs to the pseudouridine synthase TruD family.

It carries out the reaction uridine(13) in tRNA = pseudouridine(13) in tRNA. Could be responsible for synthesis of pseudouridine from uracil-13 in transfer RNAs. In Thermoplasma acidophilum (strain ATCC 25905 / DSM 1728 / JCM 9062 / NBRC 15155 / AMRC-C165), this protein is Probable tRNA pseudouridine synthase D.